The following is a 191-amino-acid chain: UPF0669 protein C6orf120 (191 aa).

The first 30 residues, 1–30 (MAAPRGRAAPWTTALLLLLASQVLSPGSCA), serve as a signal peptide directing secretion. Asn53 carries an N-linked (GlcNAc...) asparagine glycan.

It belongs to the UPF0669 family. In terms of tissue distribution, mainly expressed in hepatocytes and some weak expression in germinal center cells of lymph nodes.

Its subcellular location is the secreted. Functionally, may be involved in induction of apoptosis in CD4(+) T-cells, but not CD8(+) T-cells or hepatocytes. This chain is UPF0669 protein C6orf120 (C6orf120), found in Homo sapiens (Human).